Consider the following 252-residue polypeptide: 5-oxoprolinase subunit A (252 aa).

The protein belongs to the LamB/PxpA family. Forms a complex composed of PxpA, PxpB and PxpC.

The enzyme catalyses 5-oxo-L-proline + ATP + 2 H2O = L-glutamate + ADP + phosphate + H(+). Its function is as follows. Catalyzes the cleavage of 5-oxoproline to form L-glutamate coupled to the hydrolysis of ATP to ADP and inorganic phosphate. The sequence is that of 5-oxoprolinase subunit A from Corynebacterium glutamicum (strain ATCC 13032 / DSM 20300 / JCM 1318 / BCRC 11384 / CCUG 27702 / LMG 3730 / NBRC 12168 / NCIMB 10025 / NRRL B-2784 / 534).